A 356-amino-acid chain; its full sequence is tRNA N6-adenosine threonylcarbamoyltransferase (356 aa).

Fe cation is bound by residues H115 and H119. Substrate is bound by residues L138–G142, D171, G184, and N283. D311 contacts Fe cation.

This sequence belongs to the KAE1 / TsaD family. The cofactor is Fe(2+).

It is found in the cytoplasm. It catalyses the reaction L-threonylcarbamoyladenylate + adenosine(37) in tRNA = N(6)-L-threonylcarbamoyladenosine(37) in tRNA + AMP + H(+). Functionally, required for the formation of a threonylcarbamoyl group on adenosine at position 37 (t(6)A37) in tRNAs that read codons beginning with adenine. Is involved in the transfer of the threonylcarbamoyl moiety of threonylcarbamoyl-AMP (TC-AMP) to the N6 group of A37, together with TsaE and TsaB. TsaD likely plays a direct catalytic role in this reaction. The sequence is that of tRNA N6-adenosine threonylcarbamoyltransferase from Prochlorococcus marinus (strain NATL2A).